The primary structure comprises 1413 residues: DNA-directed RNA polymerase subunit beta' (1413 aa).

C70, C72, C85, and C88 together coordinate Zn(2+). Residues D460, D462, and D464 each coordinate Mg(2+). Residues C814, C888, C895, and C898 each contribute to the Zn(2+) site.

The protein belongs to the RNA polymerase beta' chain family. The RNAP catalytic core consists of 2 alpha, 1 beta, 1 beta' and 1 omega subunit. When a sigma factor is associated with the core the holoenzyme is formed, which can initiate transcription. It depends on Mg(2+) as a cofactor. Zn(2+) serves as cofactor.

The catalysed reaction is RNA(n) + a ribonucleoside 5'-triphosphate = RNA(n+1) + diphosphate. DNA-dependent RNA polymerase catalyzes the transcription of DNA into RNA using the four ribonucleoside triphosphates as substrates. In Buchnera aphidicola subsp. Schizaphis graminum (strain Sg), this protein is DNA-directed RNA polymerase subunit beta'.